We begin with the raw amino-acid sequence, 275 residues long: Putative ankyrin repeat protein L715 (275 aa).

ANK repeat units lie at residues 94–123 (NINY…DINY), 124–153 (NNGL…NTND), 155–183 (IFQL…SIDP), and 184–213 (IYST…SDST). The disordered stretch occupies residues 253-275 (NQDESDVGDDAENDIENDIEDDN). Residues 255–275 (DESDVGDDAENDIENDIEDDN) are compositionally biased toward acidic residues.

The sequence is that of Putative ankyrin repeat protein L715 from Acanthamoeba polyphaga mimivirus (APMV).